Here is a 575-residue protein sequence, read N- to C-terminus: Dihydroxy-acid dehydratase (575 aa).

Cys64 provides a ligand contact to [2Fe-2S] cluster. A Mg(2+)-binding site is contributed by Asp96. Residue Cys137 coordinates [2Fe-2S] cluster. Residues Asp138 and Lys139 each contribute to the Mg(2+) site. At Lys139 the chain carries N6-carboxylysine. Cys214 is a binding site for [2Fe-2S] cluster. Glu465 contacts Mg(2+). The Proton acceptor role is filled by Ser491.

Belongs to the IlvD/Edd family. Homodimer. Requires [2Fe-2S] cluster as cofactor. Mg(2+) serves as cofactor.

It carries out the reaction (2R)-2,3-dihydroxy-3-methylbutanoate = 3-methyl-2-oxobutanoate + H2O. The enzyme catalyses (2R,3R)-2,3-dihydroxy-3-methylpentanoate = (S)-3-methyl-2-oxopentanoate + H2O. Its pathway is amino-acid biosynthesis; L-isoleucine biosynthesis; L-isoleucine from 2-oxobutanoate: step 3/4. It participates in amino-acid biosynthesis; L-valine biosynthesis; L-valine from pyruvate: step 3/4. Functions in the biosynthesis of branched-chain amino acids. Catalyzes the dehydration of (2R,3R)-2,3-dihydroxy-3-methylpentanoate (2,3-dihydroxy-3-methylvalerate) into 2-oxo-3-methylpentanoate (2-oxo-3-methylvalerate) and of (2R)-2,3-dihydroxy-3-methylbutanoate (2,3-dihydroxyisovalerate) into 2-oxo-3-methylbutanoate (2-oxoisovalerate), the penultimate precursor to L-isoleucine and L-valine, respectively. The polypeptide is Dihydroxy-acid dehydratase (Mycobacterium bovis (strain ATCC BAA-935 / AF2122/97)).